A 367-amino-acid polypeptide reads, in one-letter code: Histidinol-phosphate aminotransferase 1 (367 aa).

An N6-(pyridoxal phosphate)lysine modification is found at Lys-229.

The protein belongs to the class-II pyridoxal-phosphate-dependent aminotransferase family. Histidinol-phosphate aminotransferase subfamily. Homodimer. Pyridoxal 5'-phosphate is required as a cofactor.

It carries out the reaction L-histidinol phosphate + 2-oxoglutarate = 3-(imidazol-4-yl)-2-oxopropyl phosphate + L-glutamate. The protein operates within amino-acid biosynthesis; L-histidine biosynthesis; L-histidine from 5-phospho-alpha-D-ribose 1-diphosphate: step 7/9. This chain is Histidinol-phosphate aminotransferase 1, found in Idiomarina loihiensis (strain ATCC BAA-735 / DSM 15497 / L2-TR).